The primary structure comprises 308 residues: Spermidine synthase 2 (308 aa).

Positions 17 to 254 (PGWFSEISPL…GVIGFMLCST (238 aa)) constitute a PABS domain. S-adenosyl 3-(methylsulfanyl)propylamine is bound at residue glutamine 48. Tyrosine 78 is a putrescine binding site. Residues glutamine 79, aspartate 103, glutamate 123, 154–155 (DG), and aspartate 173 each bind S-adenosyl 3-(methylsulfanyl)propylamine. Catalysis depends on aspartate 173, which acts as the Proton acceptor. Residues 173–176 (DSSD) and tyrosine 242 each bind putrescine.

Belongs to the spermidine/spermine synthase family.

The enzyme catalyses S-adenosyl 3-(methylsulfanyl)propylamine + putrescine = S-methyl-5'-thioadenosine + spermidine + H(+). Its pathway is amine and polyamine biosynthesis; spermidine biosynthesis; spermidine from putrescine: step 1/1. The sequence is that of Spermidine synthase 2 from Hyoscyamus niger (Black henbane).